The chain runs to 340 residues: 4-hydroxy-2-oxovalerate aldolase (340 aa).

In terms of domain architecture, Pyruvate carboxyltransferase spans 8–260; it reads VILHDMSLRD…SHGINLYDIM (253 aa). 16-17 lines the substrate pocket; it reads RD. Position 17 (Asp17) interacts with Mn(2+). The Proton acceptor role is filled by His20. Positions 170 and 199 each coordinate substrate. His199 and His201 together coordinate Mn(2+). Position 290 (Tyr290) interacts with substrate.

This sequence belongs to the 4-hydroxy-2-oxovalerate aldolase family.

The catalysed reaction is (S)-4-hydroxy-2-oxopentanoate = acetaldehyde + pyruvate. The protein is 4-hydroxy-2-oxovalerate aldolase of Shewanella pealeana (strain ATCC 700345 / ANG-SQ1).